The following is a 314-amino-acid chain: tRNA dimethylallyltransferase (314 aa).

Residues 1-24 are disordered; that stretch reads MAEEPQRSPAPTSPFAFTVPSNPL. 40-47 is a binding site for ATP; that stretch reads GPTASGKS. 42–47 contributes to the substrate binding site; it reads TASGKS.

It belongs to the IPP transferase family. In terms of assembly, monomer. Mg(2+) is required as a cofactor.

It catalyses the reaction adenosine(37) in tRNA + dimethylallyl diphosphate = N(6)-dimethylallyladenosine(37) in tRNA + diphosphate. In terms of biological role, catalyzes the transfer of a dimethylallyl group onto the adenine at position 37 in tRNAs that read codons beginning with uridine, leading to the formation of N6-(dimethylallyl)adenosine (i(6)A). The sequence is that of tRNA dimethylallyltransferase from Cereibacter sphaeroides (strain ATCC 17029 / ATH 2.4.9) (Rhodobacter sphaeroides).